The sequence spans 469 residues: E3 ubiquitin-protein ligase pellino homolog 3 (469 aa).

Positions 1–39 (MVLEGNPEVGSPRTSDLQHRGNKGSCVLSSPGEDAQPGE) are disordered. Serine 11 carries the post-translational modification Phosphoserine.

This sequence belongs to the pellino family. In terms of assembly, interacts with TRAF6, MAP3K14 and MAP3K7. In terms of processing, phosphorylated by IRAK1 enhancing its E3 ligase activity. In terms of tissue distribution, highly expressed in brain, heart and testis, and at lower level in kidney, liver, lung, placenta, small intestine, spleen and stomach. Isoform 1 is not expressed in lung.

It carries out the reaction S-ubiquitinyl-[E2 ubiquitin-conjugating enzyme]-L-cysteine + [acceptor protein]-L-lysine = [E2 ubiquitin-conjugating enzyme]-L-cysteine + N(6)-ubiquitinyl-[acceptor protein]-L-lysine.. It functions in the pathway protein modification; protein ubiquitination. E3 ubiquitin ligase catalyzing the covalent attachment of ubiquitin moieties onto substrate proteins. Involved in the TLR and IL-1 signaling pathways via interaction with the complex containing IRAK kinases and TRAF6. Mediates 'Lys-63'-linked polyubiquitination of IRAK1. Can activate AP1/JUN and ELK1. Acts as a regulator of innate immunity by mediating 'Lys-63'-linked polyubiquitination of RIPK2 downstream of NOD1 and NOD2, thereby transforming RIPK2 into a scaffolding protein for downstream effectors, ultimately leading to activation of the NF-kappa-B and MAP kinases signaling. Catalyzes 'Lys-63'-linked polyubiquitination of RIPK2 in parallel of XIAP. The polypeptide is E3 ubiquitin-protein ligase pellino homolog 3 (Homo sapiens (Human)).